The chain runs to 279 residues: MRDLRKLIPRLRGPGTNVLKMKKPLPLHMRTKIREHLNKSDPTVKDDKSAKPELPFGKPADRVPFWHIFKGDYVYVHQGPLKGKWGRVVETNKYTNGITIEGVNVRSVKVPIFLLRNKPEDNQDPVIDIAHEVHYANVRLLAHAKTDAGEPVLIPVKLKKHSSTNLRSIIRPNIEGVQIHTIHLPRPKTEDKPKDPEGKLDTKNPVVSKVTWSPSLSEPPLPPFAIGDLRANWSRRLDRIWGYKKNNDDFTEIAKDLVRAETAAEDLIKKPISPNTYSD.

The N-terminal 31 residues, 1–31 (MRDLRKLIPRLRGPGTNVLKMKKPLPLHMRT), are a transit peptide targeting the mitochondrion. Residues 34 to 51 (REHLNKSDPTVKDDKSAK) are compositionally biased toward basic and acidic residues. The tract at residues 34-56 (REHLNKSDPTVKDDKSAKPELPF) is disordered. The KOW domain occupies 70–100 (KGDYVYVHQGPLKGKWGRVVETNKYTNGITI). Residues 185–204 (PRPKTEDKPKDPEGKLDTKN) form a disordered region. Positions 187-202 (PKTEDKPKDPEGKLDT) are enriched in basic and acidic residues.

It belongs to the universal ribosomal protein uL24 family. As to quaternary structure, component of the mitochondrial large ribosomal subunit (mt-LSU). Mature yeast 74S mitochondrial ribosomes consist of a small (37S) and a large (54S) subunit. The 37S small subunit contains a 15S ribosomal RNA (15S mt-rRNA) and at least 32 different proteins. The 54S large subunit contains a 21S rRNA (21S mt-rRNA) and at least 45 different proteins. uL24m forms the wall of the exit tunnel.

The protein localises to the mitochondrion. Its function is as follows. Component of the mitochondrial ribosome (mitoribosome), a dedicated translation machinery responsible for the synthesis of mitochondrial genome-encoded proteins, including at least some of the essential transmembrane subunits of the mitochondrial respiratory chain. The mitoribosomes are attached to the mitochondrial inner membrane and translation products are cotranslationally integrated into the membrane. The chain is Large ribosomal subunit protein uL24m (mrpl40) from Schizosaccharomyces pombe (strain 972 / ATCC 24843) (Fission yeast).